The primary structure comprises 801 residues: Na(+)/H(+) antiporter subunit A1 (801 aa).

Helical transmembrane passes span 1 to 21 (MSLLHIAVLLPLIFALIIPFL), 30 to 50 (LGWFVLPVPIVLFIYFISLIS), 79 to 99 (LGLLFSLLITGIGSLVVLYSI), 117 to 137 (LFMGAMLGVVLSDNFIILYLF), 166 to 186 (LIITVLGGLSMLGGIILLSLA), 206 to 226 (PFFILVMILFMIGAFTKSAQV), 228 to 250 (FYIWLPDAMEAPTPVSAYLHSAT), 265 to 285 (IFAISEGWVWTITLVGLITLF), 300 to 320 (ILAFSTVSQLGMIMSMLGIGA), 337 to 357 (FVAAIFHLINHATFKGALFMI), 373 to 393 (LGGLLTIMPISFTLTVITTLS), 427 to 447 (LGILLPIIAIIGSIFTFVYSI), 472 to 492 (ILMLISPIILTSLVIVFGLFP), 522 to 542 (GITPAFLSTIGIYIIGILLLI), 591 to 611 (LVIILGILIALTFVTVISVPF), 623 to 643 (VFEGATVLFLLIASTFIIFAK), 646 to 666 (LFSIIMLSAVGYAISVLFIFF), 671 to 691 (LALTQFVVESISTALFLLCFY), 707 to 727 (LTNAVISIGVGLSVIILGLIG), and 764 to 784 (MDTLFESSVLGIAGLGVYTMI).

It belongs to the CPA3 antiporters (TC 2.A.63) subunit A family. In terms of assembly, may form a heterooligomeric complex that consists of seven subunits: mnhA1, mnhB1, mnhC1, mnhD1, mnhE1, mnhF1 and mnhG1.

Its subcellular location is the cell membrane. Mnh complex is a Na(+)/H(+) antiporter involved in Na(+) excretion. The sequence is that of Na(+)/H(+) antiporter subunit A1 (mnhA1) from Staphylococcus epidermidis (strain ATCC 35984 / DSM 28319 / BCRC 17069 / CCUG 31568 / BM 3577 / RP62A).